Here is a 505-residue protein sequence, read N- to C-terminus: Cyanidin 3-O-glucoside 7-O-glucosyltransferase (acyl-glucose) (505 aa).

The N-terminal stretch at 1–25 (MCPSFLVTLLLLQLSSLVVVLVVWA) is a signal peptide. Residues Gln-52, His-152, and 197–198 (NE) contribute to the a beta-D-glucoside site. The Proton donor role is filled by Glu-198. Residues Cys-217 and Cys-225 are joined by a disulfide bond. N-linked (GlcNAc...) asparagine glycosylation is found at Asn-224, Asn-229, and Asn-324. A beta-D-glucoside is bound by residues Tyr-341 and Glu-403. The Nucleophile role is filled by Glu-403. Asn-411 and Asn-437 each carry an N-linked (GlcNAc...) asparagine glycan. 2 residues coordinate a beta-D-glucoside: Trp-447 and Tyr-463. A glycan (N-linked (GlcNAc...) asparagine) is linked at Asn-494.

Belongs to the glycosyl hydrolase 1 family.

The protein resides in the vacuole. It catalyses the reaction 1-O-(4-hydroxy-3-methoxybenzoyl)-beta-D-glucose + cyanidin 3-O-beta-D-glucoside = cyanidin 3,7-di-O-beta-D-glucoside + vanillate. Its pathway is pigment biosynthesis; anthocyanin biosynthesis. In terms of biological role, beta-glycosidase that catalyzes the transfer of glucose moiety to anthocyanidin 3-glucoside at the 7 position. Anthocyanins are ubiquitous colored pigments that are responsible for variations in petal color. In Delphinium grandiflorum (Siberian larkspur), this protein is Cyanidin 3-O-glucoside 7-O-glucosyltransferase (acyl-glucose) (AA7GT).